The primary structure comprises 227 residues: Ribosomal RNA large subunit methyltransferase E (227 aa).

S-adenosyl-L-methionine contacts are provided by Gly78, Trp80, Asp103, Asp119, and Asp143. The active-site Proton acceptor is the Lys183.

The protein belongs to the class I-like SAM-binding methyltransferase superfamily. RNA methyltransferase RlmE family.

Its subcellular location is the cytoplasm. The catalysed reaction is uridine(2552) in 23S rRNA + S-adenosyl-L-methionine = 2'-O-methyluridine(2552) in 23S rRNA + S-adenosyl-L-homocysteine + H(+). Functionally, specifically methylates the uridine in position 2552 of 23S rRNA at the 2'-O position of the ribose in the fully assembled 50S ribosomal subunit. The polypeptide is Ribosomal RNA large subunit methyltransferase E (Rickettsia canadensis (strain McKiel)).